We begin with the raw amino-acid sequence, 256 residues long: Peptidyl-prolyl cis-trans isomerase FKBP19, chloroplastic (256 aa).

The N-terminal 29 residues, 1-29, are a transit peptide targeting the chloroplast; the sequence is MASISSFGCFPQSTALAGTSSTTRCRTTV. Residues 30-88 constitute a thylakoid transit peptide; it reads AARLADQSDDFAPLRSSGGNCGCVNNSGEFDRRKLLVSSVGLLIGALSYDSKDGDFASA. The region spanning 135-254 is the PPIase FKBP-type domain; it reads GDKVVVDWDG…LFDVELLKIV (120 aa). S164 carries the post-translational modification Phosphoserine.

It belongs to the FKBP-type PPIase family.

It is found in the plastid. The protein resides in the chloroplast thylakoid lumen. The enzyme catalyses [protein]-peptidylproline (omega=180) = [protein]-peptidylproline (omega=0). Functionally, PPIases accelerate the folding of proteins. It catalyzes the cis-trans isomerization of proline imidic peptide bonds in oligopeptides. In Arabidopsis thaliana (Mouse-ear cress), this protein is Peptidyl-prolyl cis-trans isomerase FKBP19, chloroplastic (FKBP19).